Here is a 756-residue protein sequence, read N- to C-terminus: Hyperosmolality-gated Ca2+ permeable channel 1.5 (756 aa).

Helical transmembrane passes span 7 to 27, 101 to 121, 154 to 174, 373 to 393, 425 to 445, 465 to 485, 510 to 530, 574 to 594, 628 to 648, and 651 to 671; these read IGVA…AFAI, IYLL…TVMV, SRFW…CFVL, LVIA…IAFV, FLPG…LMLM, YYMF…TALQ, ATFF…GEIL, FILG…ILVF, VVIA…TKKA, and STPL…FCQG. Residues 731–756 form a disordered region; sequence PDKTPDLVATKRGSRRFNSGSAETFT. Residues 746–756 show a composition bias toward polar residues; the sequence is RFNSGSAETFT.

It belongs to the CSC1 (TC 1.A.17) family.

Its subcellular location is the membrane. Its function is as follows. Acts as an osmosensitive calcium-permeable cation channel. The chain is Hyperosmolality-gated Ca2+ permeable channel 1.5 from Arabidopsis thaliana (Mouse-ear cress).